Here is a 206-residue protein sequence, read N- to C-terminus: Histidine biosynthesis bifunctional protein HisIE (206 aa).

The phosphoribosyl-AMP cyclohydrolase stretch occupies residues 1–117; it reads MGSNEVATGD…SCFPSAPGQF (117 aa). The phosphoribosyl-ATP pyrophosphohydrolase stretch occupies residues 118–206; that stretch reads LGSLDALVAE…AAALLESRHQ (89 aa).

In the N-terminal section; belongs to the PRA-CH family. This sequence in the C-terminal section; belongs to the PRA-PH family.

It is found in the cytoplasm. It carries out the reaction 1-(5-phospho-beta-D-ribosyl)-ATP + H2O = 1-(5-phospho-beta-D-ribosyl)-5'-AMP + diphosphate + H(+). It catalyses the reaction 1-(5-phospho-beta-D-ribosyl)-5'-AMP + H2O = 1-(5-phospho-beta-D-ribosyl)-5-[(5-phospho-beta-D-ribosylamino)methylideneamino]imidazole-4-carboxamide. The protein operates within amino-acid biosynthesis; L-histidine biosynthesis; L-histidine from 5-phospho-alpha-D-ribose 1-diphosphate: step 2/9. It participates in amino-acid biosynthesis; L-histidine biosynthesis; L-histidine from 5-phospho-alpha-D-ribose 1-diphosphate: step 3/9. The protein is Histidine biosynthesis bifunctional protein HisIE of Xanthomonas axonopodis pv. citri (strain 306).